The following is a 92-amino-acid chain: Bombyxin A-7 (92 aa).

The first 19 residues, 1–19 (MKLLLAIALMLTIVMWVST), serve as a signal peptide directing secretion. Position 20 is a pyrrolidone carboxylic acid (glutamine 20). 3 disulfide bridges follow: cysteine 29–cysteine 79, cysteine 41–cysteine 92, and cysteine 78–cysteine 83. Residues 50-70 (SDAQYASYGSAWLMPYSEGRG) constitute a propeptide, c peptide like.

The protein belongs to the insulin family. As to quaternary structure, heterodimer of a B chain and an A chain linked by two disulfide bonds.

It is found in the secreted. Its function is as follows. Brain peptide responsible for activation of prothoracic glands to produce ecdysone in insects. The sequence is that of Bombyxin A-7 (BBXA7) from Bombyx mori (Silk moth).